A 201-amino-acid polypeptide reads, in one-letter code: Coiled-coil domain-containing protein 195 (201 aa).

Residues 4–38 (DIQLMRLIQEMRAEIHKLEKENQALRMKLTASSQR) are a coiled coil. Disordered regions lie at residues 28–72 (LRMK…DAAP) and 179–201 (SKNSSSLKHSPNQATNQLSIIAE). Over residues 179–188 (SKNSSSLKHS) the composition is skewed to low complexity. Positions 189 to 201 (PNQATNQLSIIAE) are enriched in polar residues.

The sequence is that of Coiled-coil domain-containing protein 195 from Homo sapiens (Human).